Consider the following 144-residue polypeptide: Putative pre-16S rRNA nuclease (144 aa).

This sequence belongs to the YqgF nuclease family.

The protein resides in the cytoplasm. Its function is as follows. Could be a nuclease involved in processing of the 5'-end of pre-16S rRNA. The protein is Putative pre-16S rRNA nuclease of Chlorobium phaeobacteroides (strain BS1).